The sequence spans 525 residues: Ribosomal protein uS12 methylthiotransferase RimO (525 aa).

Polar residues predominate over residues 1–20 (MPKISTESVNTTIAPSQPAS). Positions 1 to 44 (MPKISTESVNTTIAPSQPASTAPKDTATLFNPAKPTATPAQSSI) are disordered. One can recognise an MTTase N-terminal domain in the interval 82-192 (PKIGFVSLGC…VIRAVALHVP (111 aa)). Positions 91, 127, 156, 230, 234, and 237 each coordinate [4Fe-4S] cluster. One can recognise a Radical SAM core domain in the interval 216–453 (LTPSHYAYLK…MTLQQDISAQ (238 aa)). Positions 456–525 (QEKIGKTLMV…EYDLFASYQA (70 aa)) constitute a TRAM domain.

Belongs to the methylthiotransferase family. RimO subfamily. It depends on [4Fe-4S] cluster as a cofactor.

Its subcellular location is the cytoplasm. It catalyses the reaction L-aspartate(89)-[ribosomal protein uS12]-hydrogen + (sulfur carrier)-SH + AH2 + 2 S-adenosyl-L-methionine = 3-methylsulfanyl-L-aspartate(89)-[ribosomal protein uS12]-hydrogen + (sulfur carrier)-H + 5'-deoxyadenosine + L-methionine + A + S-adenosyl-L-homocysteine + 2 H(+). Functionally, catalyzes the methylthiolation of an aspartic acid residue of ribosomal protein uS12. This chain is Ribosomal protein uS12 methylthiotransferase RimO, found in Psychrobacter arcticus (strain DSM 17307 / VKM B-2377 / 273-4).